The sequence spans 265 residues: Type III pantothenate kinase (265 aa).

9 to 16 (DAGNSRIK) is an ATP binding site. Substrate is bound by residues Tyr96 and 103–106 (GSDR). Catalysis depends on Asp105, which acts as the Proton acceptor. Thr129 contacts ATP. Thr189 is a substrate binding site.

It belongs to the type III pantothenate kinase family. In terms of assembly, homodimer. It depends on NH4(+) as a cofactor. K(+) is required as a cofactor.

Its subcellular location is the cytoplasm. It catalyses the reaction (R)-pantothenate + ATP = (R)-4'-phosphopantothenate + ADP + H(+). It participates in cofactor biosynthesis; coenzyme A biosynthesis; CoA from (R)-pantothenate: step 1/5. Its function is as follows. Catalyzes the phosphorylation of pantothenate (Pan), the first step in CoA biosynthesis. In Burkholderia orbicola (strain AU 1054), this protein is Type III pantothenate kinase.